We begin with the raw amino-acid sequence, 477 residues long: Glutamyl-tRNA(Gln) amidotransferase subunit A (477 aa).

Catalysis depends on charge relay system residues K76 and S151. S175 functions as the Acyl-ester intermediate in the catalytic mechanism.

The protein belongs to the amidase family. GatA subfamily. As to quaternary structure, heterotrimer of A, B and C subunits.

It catalyses the reaction L-glutamyl-tRNA(Gln) + L-glutamine + ATP + H2O = L-glutaminyl-tRNA(Gln) + L-glutamate + ADP + phosphate + H(+). In terms of biological role, allows the formation of correctly charged Gln-tRNA(Gln) through the transamidation of misacylated Glu-tRNA(Gln) in organisms which lack glutaminyl-tRNA synthetase. The reaction takes place in the presence of glutamine and ATP through an activated gamma-phospho-Glu-tRNA(Gln). The sequence is that of Glutamyl-tRNA(Gln) amidotransferase subunit A from Prosthecochloris aestuarii (strain DSM 271 / SK 413).